A 304-amino-acid chain; its full sequence is CRISPR-associated endonuclease Cas1 (304 aa).

Mn(2+) contacts are provided by E148, H204, and E219.

Belongs to the CRISPR-associated endonuclease Cas1 family. Homodimer, forms a heterotetramer with a Cas2 homodimer. The cofactor is Mg(2+). Requires Mn(2+) as cofactor.

Functionally, CRISPR (clustered regularly interspaced short palindromic repeat), is an adaptive immune system that provides protection against mobile genetic elements (viruses, transposable elements and conjugative plasmids). CRISPR clusters contain spacers, sequences complementary to antecedent mobile elements, and target invading nucleic acids. CRISPR clusters are transcribed and processed into CRISPR RNA (crRNA). Acts as a dsDNA endonuclease. Involved in the integration of spacer DNA into the CRISPR cassette. The protein is CRISPR-associated endonuclease Cas1 of Neisseria meningitidis serogroup C (strain 8013).